The following is a 302-amino-acid chain: Sulfate adenylyltransferase subunit 2 (302 aa).

The protein belongs to the PAPS reductase family. CysD subfamily. Heterodimer composed of CysD, the smaller subunit, and CysN.

It catalyses the reaction sulfate + ATP + H(+) = adenosine 5'-phosphosulfate + diphosphate. Its pathway is sulfur metabolism; hydrogen sulfide biosynthesis; sulfite from sulfate: step 1/3. In terms of biological role, with CysN forms the ATP sulfurylase (ATPS) that catalyzes the adenylation of sulfate producing adenosine 5'-phosphosulfate (APS) and diphosphate, the first enzymatic step in sulfur assimilation pathway. APS synthesis involves the formation of a high-energy phosphoric-sulfuric acid anhydride bond driven by GTP hydrolysis by CysN coupled to ATP hydrolysis by CysD. The chain is Sulfate adenylyltransferase subunit 2 from Escherichia coli O9:H4 (strain HS).